The following is a 165-amino-acid chain: Nucleotide-binding protein RoseRS_0530 (165 aa).

Belongs to the YajQ family.

In terms of biological role, nucleotide-binding protein. This Roseiflexus sp. (strain RS-1) protein is Nucleotide-binding protein RoseRS_0530.